We begin with the raw amino-acid sequence, 78 residues long: Translational regulator CsrA (78 aa).

Belongs to the CsrA/RsmA family. As to quaternary structure, homodimer; the beta-strands of each monomer intercalate to form a hydrophobic core, while the alpha-helices form wings that extend away from the core.

Its subcellular location is the cytoplasm. A translational regulator that binds mRNA to regulate translation initiation and/or mRNA stability. Usually binds in the 5'-UTR at or near the Shine-Dalgarno sequence preventing ribosome-binding, thus repressing translation. Its main target seems to be the major flagellin gene, while its function is anatagonized by FliW. The polypeptide is Translational regulator CsrA (Geobacter metallireducens (strain ATCC 53774 / DSM 7210 / GS-15)).